Consider the following 111-residue polypeptide: Vacuolar ATPase assembly integral membrane protein VMA21 (111 aa).

At 1–39 (MATRRIVATEKSILEKDDHIGSSPAAGEKSNITPAVPLD) the chain is on the cytoplasmic side. Residues 40–60 (VILKLLAFTLAMVVIPIGSYF) form a helical membrane-spanning segment. Residues 61 to 73 (VTVNSIFKGNSTY) lie on the Lumenal side of the membrane. The chain crosses the membrane as a helical span at residues 74–94 (AGALAAIMANVVLVAYVVVAM). At 95–111 (NEDQTEQEKAKEGKKDR) the chain is on the cytoplasmic side. Residues 108–111 (KKDR) carry the Prevents secretion from ER motif.

It belongs to the VMA21 family.

Its subcellular location is the endoplasmic reticulum membrane. It localises to the endoplasmic reticulum-Golgi intermediate compartment membrane. It is found in the cytoplasmic vesicle. The protein resides in the COPII-coated vesicle membrane. Functionally, required for the assembly of the V0 complex of the vacuolar ATPase (V-ATPase) in the endoplasmic reticulum. In Pyricularia oryzae (strain 70-15 / ATCC MYA-4617 / FGSC 8958) (Rice blast fungus), this protein is Vacuolar ATPase assembly integral membrane protein VMA21.